A 2617-amino-acid chain; its full sequence is Non-reducing polyketide synthase epaA (2617 aa).

The N-terminal acylcarrier protein transacylase domain (SAT) stretch occupies residues 95 to 231 (PNILLSPMVV…AARSISSLQQ (137 aa)). C132 functions as the Nucleophile; for transacylase activity in the catalytic mechanism. The active-site Proton donor/acceptor; for transacylase activity is the H250. Residues 372-790 (PNEIAVIGMS…GSNASMVVAQ (419 aa)) form the Ketosynthase family 3 (KS3) domain. Active-site for beta-ketoacyl synthase activity residues include C539, H674, and H713. The malonyl-CoA:ACP transacylase (MAT) domain stretch occupies residues 902 to 1193 (FGGQISNYVG…ITSMASRALG (292 aa)). Positions 1282 to 1413 (PKTLWSLIEA…GKLAFLSGQD (132 aa)) are N-terminal hotdog fold. In terms of domain architecture, PKS/mFAS DH spans 1282-1591 (PKTLWSLIEA…YHKVAKASMS (310 aa)). A product template (PT) domain region spans residues 1310–1589 (LVSGHVIANT…INYHKVAKAS (280 aa)). The active-site Proton acceptor; for dehydratase activity is the H1314. Residues 1443 to 1591 (ADDIIQGRNI…YHKVAKASMS (149 aa)) form a C-terminal hotdog fold region. D1499 functions as the Proton donor; for dehydratase activity in the catalytic mechanism. Residues 1600–1651 (TEAAPSSSTRAHPTSSSSPRLPGPSVPEDKSQNETQPAGTNAVAKKKSEKSA) form a disordered region. A compositionally biased stretch (low complexity) spans 1602 to 1619 (AAPSSSTRAHPTSSSSPR). The Carrier domain maps to 1653–1727 (QNVLEKTRAL…GLVEYVQSAV (75 aa)). The residue at position 1687 (S1687) is an O-(pantetheine 4'-phosphoryl)serine. The interval 1728–1799 (GVPTNGDEPD…PAMPPASSKT (72 aa)) is disordered. The span at 1750-1766 (LAPSPSSSSSSTNLTED) shows a compositional bias: low complexity. A compositionally biased stretch (polar residues) spans 1769–1785 (LDQAETTTNISSYPGQT). A methyltransferase domain region spans residues 1970 to 2158 (DSLLNKLSYR…VGYGQVDWTD (189 aa)). An NADPH-binding (R) domain region spans residues 2240-2485 (ITGATGSLGV…LCWTPVNDVA (246 aa)).

The cofactor is pantetheine 4'-phosphate.

Its pathway is secondary metabolite biosynthesis. Its function is as follows. Non-reducing polyketide synthase; part of the gene cluster that mediates the biosynthesis of nigerpyrone and its derivatives carbonarone A and pestalamide A. The biosynthesis pathway begins with the polyketide assembly by epaA to form phenylacetyl triketide precursor from successive condensation of two malonyl-CoA, presumably with one phenylacetyl-CoA starter unit produced by the phenylacetyl-CoA ligase epaB. For the nigerpyrone biosynthesis, the reactive polyketide chain is released as an aldehyde through the R-domain. A nonenzymatic cyclization and dehydration may create nigerpyrone. For the biosynthesis of carbonarone A and pestalamide A, an extra methyl group is added through the C-methyltransferase domain. Several further steps involving the dehydrogenase orf1, the cytochrome P450 monooxygenase orf2 and the FAD-dependent monooxygenase orf3 are required to form a carbonarone A precursor which is converted to carbonarone A via cyclization. The O-acetyltransferase epaC could catalyze the transfer of 2-methylsuccinyl-CoA, a common intermediate in the ethylmalonyl-CoA pathway, to generate the final product pestalamide A. This Aspergillus niger (strain ATCC MYA-4892 / CBS 513.88 / FGSC A1513) protein is Non-reducing polyketide synthase epaA.